The chain runs to 362 residues: Ferredoxin--NADP reductase 1 (362 aa).

Residues D47, Q55, Y60, A100, F141, D309, and S350 each contribute to the FAD site.

This sequence belongs to the ferredoxin--NADP reductase type 2 family. In terms of assembly, homodimer. FAD serves as cofactor.

The enzyme catalyses 2 reduced [2Fe-2S]-[ferredoxin] + NADP(+) + H(+) = 2 oxidized [2Fe-2S]-[ferredoxin] + NADPH. The sequence is that of Ferredoxin--NADP reductase 1 from Cupriavidus pinatubonensis (strain JMP 134 / LMG 1197) (Cupriavidus necator (strain JMP 134)).